A 315-amino-acid chain; its full sequence is Epithelial cell adhesion molecule (315 aa).

The N-terminal stretch at 1–23 (MAGPQALAFGLLLAVVTATLAAA) is a signal peptide. At 24–266 (QRDCVCDNYK…APEFSMQGLT (243 aa)) the chain is on the extracellular side. Disulfide bonds link C27-C46, C29-C59, C38-C48, C66-C99, C110-C116, and C118-C135. The 73-residue stretch at 63-135 (ASKCLAMKAE…RTDKDTEITC (73 aa)) folds into the Thyroglobulin type-1 domain. A glycan (N-linked (GlcNAc...) asparagine) is linked at N111. N198 carries N-linked (GlcNAc...) asparagine glycosylation. The helical transmembrane segment at 267 to 289 (AGIIAVIVVVSLAVIAGIVVLVI) threads the bilayer. Residues 290–315 (STRKKSAKYEKAEIKEMGEIHRELNA) lie on the Cytoplasmic side of the membrane.

The protein belongs to the EPCAM family. As to quaternary structure, monomer. Interacts with phosphorylated CLDN7. Post-translationally, glycosylation at Asn-198 is crucial for protein stability.

Its subcellular location is the lateral cell membrane. The protein resides in the cell junction. The protein localises to the tight junction. Functionally, may act as a physical homophilic interaction molecule between intestinal epithelial cells (IECs) and intraepithelial lymphocytes (IELs) at the mucosal epithelium for providing immunological barrier as a first line of defense against mucosal infection. Plays a role in embryonic stem cells proliferation and differentiation. Up-regulates the expression of FABP5, MYC and cyclins A and E. This Mus musculus (Mouse) protein is Epithelial cell adhesion molecule (Epcam).